The sequence spans 430 residues: Tektin-2 (430 aa).

2 coiled-coil regions span residues K75 to L162 and K226 to K380.

Belongs to the tektin family. As to quaternary structure, microtubule inner protein component of sperm flagellar doublet microtubules. May interact with CCDC172. Post-translationally, tyrosine phosphorylated. In terms of processing, ubiquitinated, leading to its degradation. Deubiquitinated by USP16, promoting its stability.

The protein resides in the cytoplasm. It localises to the cytoskeleton. It is found in the cilium axoneme. Its subcellular location is the flagellum axoneme. The protein localises to the microtubule organizing center. In terms of biological role, microtubule inner protein (MIP) part of the dynein-decorated doublet microtubules (DMTs) in cilia and flagellar axoneme. Plays a key role in the assembly or attachment of the inner dynein arm to microtubules in sperm flagella and tracheal cilia. Forms filamentous polymers in the walls of ciliary and flagellar microtubules. In Rattus norvegicus (Rat), this protein is Tektin-2 (Tekt2).